The sequence spans 282 residues: Large ribosomal subunit protein uL4c (282 aa).

The transit peptide at 1-49 (MASSATAPNSLSFFSSSLFLSSSHQIPKTYISVSKLGSGRVSKPLSVSS) directs the protein to the chloroplast. Residues 106-138 (EVRGGGIKPYSQKKTGHARRGSQRTPLRPGGGV) form a disordered region.

Belongs to the universal ribosomal protein uL4 family. Part of the 50S ribosomal subunit.

The protein localises to the plastid. It localises to the chloroplast. Its function is as follows. This protein binds directly and specifically to 23S rRNA. May play a role in plastid transcriptional regulation. The chain is Large ribosomal subunit protein uL4c (RPL4) from Arabidopsis thaliana (Mouse-ear cress).